We begin with the raw amino-acid sequence, 417 residues long: Serine hydroxymethyltransferase (417 aa).

(6S)-5,6,7,8-tetrahydrofolate contacts are provided by residues leucine 112 and 116 to 118 (GHL). Lysine 221 is modified (N6-(pyridoxal phosphate)lysine). Glutamate 247 provides a ligand contact to (6S)-5,6,7,8-tetrahydrofolate.

Belongs to the SHMT family. Homodimer. Pyridoxal 5'-phosphate is required as a cofactor.

Its subcellular location is the cytoplasm. The enzyme catalyses (6R)-5,10-methylene-5,6,7,8-tetrahydrofolate + glycine + H2O = (6S)-5,6,7,8-tetrahydrofolate + L-serine. Its pathway is one-carbon metabolism; tetrahydrofolate interconversion. It functions in the pathway amino-acid biosynthesis; glycine biosynthesis; glycine from L-serine: step 1/1. Functionally, catalyzes the reversible interconversion of serine and glycine with tetrahydrofolate (THF) serving as the one-carbon carrier. This reaction serves as the major source of one-carbon groups required for the biosynthesis of purines, thymidylate, methionine, and other important biomolecules. Also exhibits THF-independent aldolase activity toward beta-hydroxyamino acids, producing glycine and aldehydes, via a retro-aldol mechanism. The sequence is that of Serine hydroxymethyltransferase from Borrelia turicatae (strain 91E135).